The primary structure comprises 264 residues: Glutamate 5-kinase (264 aa).

An ATP-binding site is contributed by lysine 9. The substrate site is built by serine 47, aspartate 132, and asparagine 144. Residues 164–165 (SD) and 206–212 (TGGIVTK) each bind ATP.

This sequence belongs to the glutamate 5-kinase family.

The protein resides in the cytoplasm. The catalysed reaction is L-glutamate + ATP = L-glutamyl 5-phosphate + ADP. Its pathway is amino-acid biosynthesis; L-proline biosynthesis; L-glutamate 5-semialdehyde from L-glutamate: step 1/2. Its function is as follows. Catalyzes the transfer of a phosphate group to glutamate to form L-glutamate 5-phosphate. The chain is Glutamate 5-kinase from Helicobacter hepaticus (strain ATCC 51449 / 3B1).